Reading from the N-terminus, the 515-residue chain is Protein disulfide-isomerase (515 aa).

A signal peptide spans 1-20; the sequence is MRSFAPWLVSLLGASAVVAA. 2 consecutive Thioredoxin domains span residues 21-132 and 339-470; these read ADTE…QSLP and VLDG…ENGK. Active-site nucleophile residues include Cys54, Cys57, Cys389, and Cys392. Cystine bridges form between Cys54-Cys57 and Cys389-Cys392. Residues 478 to 515 form a disordered region; the sequence is VASEETQEGGDVTEAAPSATEAETPAATDDEKAEHDEL. A compositionally biased stretch (low complexity) spans 490–504; that stretch reads TEAAPSATEAETPAA. A compositionally biased stretch (basic and acidic residues) spans 506–515; it reads DDEKAEHDEL. The short motif at 512–515 is the Prevents secretion from ER element; it reads HDEL.

Belongs to the protein disulfide isomerase family.

Its subcellular location is the endoplasmic reticulum lumen. The catalysed reaction is Catalyzes the rearrangement of -S-S- bonds in proteins.. Participates in the folding of proteins containing disulfide bonds, may be involved in glycosylation, prolyl hydroxylation and triglyceride transfer. This chain is Protein disulfide-isomerase (pdiA), found in Aspergillus niger.